Consider the following 65-residue polypeptide: Large ribosomal subunit protein uL29 (65 aa).

It belongs to the universal ribosomal protein uL29 family.

This is Large ribosomal subunit protein uL29 (rpmC) from Borreliella burgdorferi (strain ATCC 35210 / DSM 4680 / CIP 102532 / B31) (Borrelia burgdorferi).